Reading from the N-terminus, the 183-residue chain is Protein US32 (183 aa).

This sequence belongs to the herpesviridae US1 family.

The polypeptide is Protein US32 (US32) (Homo sapiens (Human)).